The sequence spans 264 residues: Protein-L-isoaspartate O-methyltransferase (264 aa).

The disordered stretch occupies residues 1 to 49 (MRKPVGSKDGSGVYSRQGLDGYTPANSNTRISTATLPRPEPLRPAASSA). Residues 24–35 (PANSNTRISTAT) show a composition bias toward polar residues. The active site involves S112.

Belongs to the methyltransferase superfamily. L-isoaspartyl/D-aspartyl protein methyltransferase family.

The protein localises to the cytoplasm. It catalyses the reaction [protein]-L-isoaspartate + S-adenosyl-L-methionine = [protein]-L-isoaspartate alpha-methyl ester + S-adenosyl-L-homocysteine. Catalyzes the methyl esterification of L-isoaspartyl residues in peptides and proteins that result from spontaneous decomposition of normal L-aspartyl and L-asparaginyl residues. It plays a role in the repair and/or degradation of damaged proteins. This Bordetella avium (strain 197N) protein is Protein-L-isoaspartate O-methyltransferase.